The following is a 179-amino-acid chain: Bifunctional protein PyrR (179 aa).

Residues 100–112 carry the PRPP-binding motif; it reads VILVDDVLFTGRT.

This sequence belongs to the purine/pyrimidine phosphoribosyltransferase family. PyrR subfamily.

The catalysed reaction is UMP + diphosphate = 5-phospho-alpha-D-ribose 1-diphosphate + uracil. Its function is as follows. Regulates the transcription of the pyrimidine nucleotide (pyr) operon in response to exogenous pyrimidines. In terms of biological role, also displays a weak uracil phosphoribosyltransferase activity which is not physiologically significant. The protein is Bifunctional protein PyrR of Actinobacillus succinogenes (strain ATCC 55618 / DSM 22257 / CCUG 43843 / 130Z).